Reading from the N-terminus, the 254-residue chain is Low affinity immunoglobulin gamma Fc region receptor III-A (254 aa).

An N-terminal signal peptide occupies residues 1 to 16 (MWQLLLPTALLLLVSA). Over 17-208 (GMRTEDLPKA…ISSFFPPGYQ (192 aa)) the chain is Extracellular. 2 Ig-like C2-type domains span residues 24–105 (PKAV…LEVH) and 107–189 (GWLL…VNIT). An intrachain disulfide couples Cys-47 to Cys-89. N-linked (GlcNAc...) asparagine glycosylation is found at Asn-56, Asn-63, and Asn-92. Cys-128 and Cys-172 are joined by a disulfide. 2 N-linked (GlcNAc...) asparagine glycosylation sites follow: Asn-180 and Asn-187. The chain crosses the membrane as a helical span at residues 209–229 (VSFCLVMVLLFAVDTGLYFSV). Residues 230–254 (KTNIRSSTRDWKDHKFKWRKDPQDK) lie on the Cytoplasmic side of the membrane. Ser-236 carries the phosphoserine; by PKC modification. Phosphothreonine; by PKC is present on Thr-237.

Forms a heterooligomeric complex with ITAM-containing signaling subunits, either a homodimer of CD247, a homodimer of FCER1G or a heterodimer of CD247 and FCER1G. Interacts (via transmembrane domain) with signaling subunits; this interaction is a prerequisite for receptor complex expression on the cell surface and intracellular signal transduction. Binds the Fc region of antigen-complexed IgG with a preference for IgG1 and IgG3 isotypes. Interacts with CD2; this interaction is involved in NK cell activation and cytotoxicity. Interacts with S100A4; this interaction inhibits PKC-dependent phosphorylation of FCGR3A. Glycosylated. Contains high mannose- and complex-type oligosaccharides. Glycosylation at Asn-180 is mandatory for high affinity binding to the Fc and for discrimination between fucosylated and afucosylated IgG glycoforms. In terms of processing, undergoes rapid ectodomain shedding upon NK cell stimulation. The soluble form is produced by a proteolytic cleavage mediated by ADAM17. Repeated stimulation causes receptor shedding, a mechanism that allows for increased NK cell motility and detachment from opsonized target cells while avoiding activation-induced NK cell apoptosis. Post-translationally, phosphorylated at RSSTR motif by PKC. The relevant physiological PKCs might be PRKCI, PRKCG, PRKCE, PRKCH and PRKCQ. In terms of tissue distribution, expressed in natural killer cells (at protein level). Expressed in a subset of circulating monocytes (at protein level).

The protein resides in the cell membrane. It localises to the secreted. In terms of biological role, receptor for the invariable Fc fragment of immunoglobulin gamma (IgG). Optimally activated upon binding of clustered antigen-IgG complexes displayed on cell surfaces, triggers lysis of antibody-coated cells, a process known as antibody-dependent cellular cytotoxicity (ADCC). Does not bind free monomeric IgG, thus avoiding inappropriate effector cell activation in the absence of antigenic trigger. Mediates IgG effector functions on natural killer (NK) cells. Binds antigen-IgG complexes generated upon infection and triggers NK cell-dependent cytokine production and degranulation to limit viral load and propagation. Involved in the generation of memory-like adaptive NK cells capable to produce high amounts of IFNG and to efficiently eliminate virus-infected cells via ADCC. Regulates NK cell survival and proliferation, in particular by preventing NK cell progenitor apoptosis. Fc-binding subunit that associates with CD247 and/or FCER1G adapters to form functional signaling complexes. Following the engagement of antigen-IgG complexes, triggers phosphorylation of immunoreceptor tyrosine-based activation motif (ITAM)-containing adapters with subsequent activation of phosphatidylinositol 3-kinase signaling and sustained elevation of intracellular calcium that ultimately drive NK cell activation. The ITAM-dependent signaling coupled to receptor phosphorylation by PKC mediates robust intracellular calcium flux that leads to production of pro-inflammatory cytokines, whereas in the absence of receptor phosphorylation it mainly activates phosphatidylinositol 3-kinase signaling leading to cell degranulation. Costimulates NK cells and trigger lysis of target cells independently of IgG binding. Mediates the antitumor activities of therapeutic antibodies. Upon ligation on monocytes triggers TNFA-dependent ADCC of IgG-coated tumor cells. Mediates enhanced ADCC in response to afucosylated IgGs. (Microbial infection) Involved in Dengue virus pathogenesis via antibody-dependent enhancement (ADE) mechanism. Secondary infection with Dengue virus triggers elevated levels of afucosylated non-neutralizing IgG1s with reactivity to viral envelope/E protein. Viral antigen-IgG1 complexes bind with high affinity to FCGR3A, facilitating virus entry in myeloid cells and subsequent viral replication. The sequence is that of Low affinity immunoglobulin gamma Fc region receptor III-A from Homo sapiens (Human).